Reading from the N-terminus, the 324-residue chain is Anthranilate phosphoribosyltransferase (324 aa).

Residues Gly-72, 75 to 76 (GD), Thr-80, 82 to 85 (NVST), 99 to 107 (KHGNVSVTS), and Ser-111 each bind 5-phospho-alpha-D-ribose 1-diphosphate. Gly-72 contacts anthranilate. A Mg(2+)-binding site is contributed by Ser-84. Position 102 (Asn-102) interacts with anthranilate. Arg-157 lines the anthranilate pocket. Asp-215 and Glu-216 together coordinate Mg(2+).

Belongs to the anthranilate phosphoribosyltransferase family. In terms of assembly, homodimer. Mg(2+) is required as a cofactor.

It carries out the reaction N-(5-phospho-beta-D-ribosyl)anthranilate + diphosphate = 5-phospho-alpha-D-ribose 1-diphosphate + anthranilate. It participates in amino-acid biosynthesis; L-tryptophan biosynthesis; L-tryptophan from chorismate: step 2/5. In terms of biological role, catalyzes the transfer of the phosphoribosyl group of 5-phosphorylribose-1-pyrophosphate (PRPP) to anthranilate to yield N-(5'-phosphoribosyl)-anthranilate (PRA). This is Anthranilate phosphoribosyltransferase from Pyrococcus furiosus (strain ATCC 43587 / DSM 3638 / JCM 8422 / Vc1).